Consider the following 313-residue polypeptide: WD repeat-containing protein 82-A (313 aa).

6 WD repeats span residues 19 to 58 (ENSD…PKRT), 105 to 144 (GHSK…CQGL), 146 to 184 (HLQG…KGPF), 192 to 231 (DRTC…VMHT), 236 to 276 (NNSK…KVAV), and 280 to 313 (KHTG…TIDD).

It belongs to the WD repeat SWD2 family. Component of the SET1/COMPASS complex. Component of the PNUTS-PP1 phosphatase complex.

It is found in the nucleus. The protein resides in the chromosome. Its subcellular location is the cytoplasm. Regulatory component of the SET1/COMPASS complex implicated in the tethering of this complex to transcriptional start sites of active genes. Facilitates histone H3 'Lys-4' methylation (H3K4me) via recruitment of the SETD1A or SETD1B to the 'Ser-5' phosphorylated C-terminal domain (CTD) of RNA polymerase II large subunit (POLR2A). Component of the PNUTS-PP1 protein phosphatase complex, a protein phosphatase 1 (PP1) complex that promotes RNA polymerase II transcription pause-release, allowing transcription elongation. This chain is WD repeat-containing protein 82-A (wdr82-a), found in Xenopus laevis (African clawed frog).